We begin with the raw amino-acid sequence, 150 residues long: D-aminoacyl-tRNA deacylase (150 aa).

Positions 140–141 (GP) match the Gly-cisPro motif, important for rejection of L-amino acids motif.

The protein belongs to the DTD family. In terms of assembly, homodimer.

The protein resides in the cytoplasm. It carries out the reaction glycyl-tRNA(Ala) + H2O = tRNA(Ala) + glycine + H(+). The enzyme catalyses a D-aminoacyl-tRNA + H2O = a tRNA + a D-alpha-amino acid + H(+). Functionally, an aminoacyl-tRNA editing enzyme that deacylates mischarged D-aminoacyl-tRNAs. Also deacylates mischarged glycyl-tRNA(Ala), protecting cells against glycine mischarging by AlaRS. Acts via tRNA-based rather than protein-based catalysis; rejects L-amino acids rather than detecting D-amino acids in the active site. By recycling D-aminoacyl-tRNA to D-amino acids and free tRNA molecules, this enzyme counteracts the toxicity associated with the formation of D-aminoacyl-tRNA entities in vivo and helps enforce protein L-homochirality. The sequence is that of D-aminoacyl-tRNA deacylase (DTD1) from Eremothecium gossypii (strain ATCC 10895 / CBS 109.51 / FGSC 9923 / NRRL Y-1056) (Yeast).